Reading from the N-terminus, the 274-residue chain is tRNA (guanine-N(7)-)-methyltransferase (274 aa).

The interval 16-40 (ASASRGAATGSRGVAPAVPRGGAPA) is disordered. Residues E106, E131, D158, and D181 each coordinate S-adenosyl-L-methionine. D181 is a catalytic residue. Substrate contacts are provided by residues K185, D217, and 252–255 (TKFE).

The protein belongs to the class I-like SAM-binding methyltransferase superfamily. TrmB family.

The catalysed reaction is guanosine(46) in tRNA + S-adenosyl-L-methionine = N(7)-methylguanosine(46) in tRNA + S-adenosyl-L-homocysteine. The protein operates within tRNA modification; N(7)-methylguanine-tRNA biosynthesis. Functionally, catalyzes the formation of N(7)-methylguanine at position 46 (m7G46) in tRNA. The chain is tRNA (guanine-N(7)-)-methyltransferase from Verminephrobacter eiseniae (strain EF01-2).